The following is a 159-amino-acid chain: Prs ADP-ribosylating antitoxin (159 aa).

Positions 99-159 (EDMVEESGET…LAQIQSGAFA (61 aa)) are sufficient to neutralize toxin.

The protein belongs to the MbcA/ParS/Xre antitoxin family. As to quaternary structure, forms heterotetrameric ParS(2)-ParT(2) complexes. The 2 antitoxin fragments do not make contact in the crystal structure.

Functionally, antitoxin component of a type II toxin-antitoxin (TA) system. Neutralizes the bacteriostatic effect of cognate toxin ParT by inserting into its active site. The polypeptide is Prs ADP-ribosylating antitoxin (Sphingobium sp. (strain YBL2)).